Consider the following 306-residue polypeptide: 2-phospho-L-lactate transferase (306 aa).

Asp-48 contributes to the 7,8-didemethyl-8-hydroxy-5-deazariboflavin binding site.

It belongs to the CofD family. As to quaternary structure, homodimer. Mg(2+) is required as a cofactor.

The catalysed reaction is (2S)-lactyl-2-diphospho-5'-guanosine + 7,8-didemethyl-8-hydroxy-5-deazariboflavin = oxidized coenzyme F420-0 + GMP + H(+). It participates in cofactor biosynthesis; coenzyme F420 biosynthesis. In terms of biological role, catalyzes the transfer of the 2-phospholactate moiety from (2S)-lactyl-2-diphospho-5'-guanosine to 7,8-didemethyl-8-hydroxy-5-deazariboflavin (FO) with the formation of oxidized coenzyme F420-0 and GMP. The polypeptide is 2-phospho-L-lactate transferase (Methanococcoides burtonii (strain DSM 6242 / NBRC 107633 / OCM 468 / ACE-M)).